The sequence spans 420 residues: MDKLIIEGGSRINGEIRISGSKNSGLPILAATLLASGPMHICNLPHLNDITTMLALLRCMGVGVTIDEKMCVEVDPTSITEFEAPYELVRTMRASILVLGPMLARFGKADVSFPGGCAIGSRPVDIHLRGLEAMGAEIEVDGGYIRAKAPNGLKGARYLMDTVTVGGTENLLMAAVLAEGTTILENAAREPEIVDLAECLIAMGAKIKGVGTDRLEIEGVKTLNGCTYEVMPDRIETGTYLVAAAATGGWVKLRDTRADILEAVLLKLEEAGAEITVGEGTIELAMHGKRPKAVSFKTAPYPAFPTDMQAQFTAMNAIAEGTSSVVETIFENRLIQVHELNRMGANIRLEGNTAIITGVEKLKAAPVMASDLRASASLVIAGMLAEGDTLVDRIYHIDRGYECIEEKLQALGVRIRRVPG.

Position 22 to 23 (22 to 23 (KN)) interacts with phosphoenolpyruvate. Arg-93 contributes to the UDP-N-acetyl-alpha-D-glucosamine binding site. Cys-117 serves as the catalytic Proton donor. Position 117 is a 2-(S-cysteinyl)pyruvic acid O-phosphothioketal (Cys-117). 2 residues coordinate UDP-N-acetyl-alpha-D-glucosamine: Asp-307 and Ile-329.

This sequence belongs to the EPSP synthase family. MurA subfamily.

The protein resides in the cytoplasm. It carries out the reaction phosphoenolpyruvate + UDP-N-acetyl-alpha-D-glucosamine = UDP-N-acetyl-3-O-(1-carboxyvinyl)-alpha-D-glucosamine + phosphate. The protein operates within cell wall biogenesis; peptidoglycan biosynthesis. Its function is as follows. Cell wall formation. Adds enolpyruvyl to UDP-N-acetylglucosamine. The polypeptide is UDP-N-acetylglucosamine 1-carboxyvinyltransferase (Saccharophagus degradans (strain 2-40 / ATCC 43961 / DSM 17024)).